Reading from the N-terminus, the 644-residue chain is Chaperone protein DnaK (644 aa).

Thr199 is subject to Phosphothreonine; by autocatalysis. A disordered region spans residues 602 to 644 (LYAEQSAQQQGSAGATGGEQPKADKAADDGVVDAEFEEVKDDK). The span at 604–614 (AEQSAQQQGSA) shows a compositional bias: low complexity. Residues 631–644 (GVVDAEFEEVKDDK) are compositionally biased toward acidic residues.

It belongs to the heat shock protein 70 family.

In terms of biological role, acts as a chaperone. In Teredinibacter turnerae (strain ATCC 39867 / T7901), this protein is Chaperone protein DnaK.